The chain runs to 81 residues: Photosystem I iron-sulfur center (81 aa).

4Fe-4S ferredoxin-type domains follow at residues 2–31 (SHSV…MIPW) and 39–68 (IAPA…VRVY). The [4Fe-4S] cluster site is built by Cys-11, Cys-14, Cys-17, Cys-21, Cys-48, Cys-51, Cys-54, and Cys-58.

As to quaternary structure, the eukaryotic PSI reaction center is composed of at least 11 subunits. It depends on [4Fe-4S] cluster as a cofactor.

Its subcellular location is the plastid. It localises to the chloroplast thylakoid membrane. It carries out the reaction reduced [plastocyanin] + hnu + oxidized [2Fe-2S]-[ferredoxin] = oxidized [plastocyanin] + reduced [2Fe-2S]-[ferredoxin]. Functionally, apoprotein for the two 4Fe-4S centers FA and FB of photosystem I (PSI); essential for photochemical activity. FB is the terminal electron acceptor of PSI, donating electrons to ferredoxin. The C-terminus interacts with PsaA/B/D and helps assemble the protein into the PSI complex. Required for binding of PsaD and PsaE to PSI. PSI is a plastocyanin-ferredoxin oxidoreductase, converting photonic excitation into a charge separation, which transfers an electron from the donor P700 chlorophyll pair to the spectroscopically characterized acceptors A0, A1, FX, FA and FB in turn. This is Photosystem I iron-sulfur center from Chloranthus spicatus (Chulantree).